Here is a 167-residue protein sequence, read N- to C-terminus: Large ribosomal subunit protein uL10 (167 aa).

Belongs to the universal ribosomal protein uL10 family. In terms of assembly, part of the ribosomal stalk of the 50S ribosomal subunit. The N-terminus interacts with L11 and the large rRNA to form the base of the stalk. The C-terminus forms an elongated spine to which L12 dimers bind in a sequential fashion forming a multimeric L10(L12)X complex.

Forms part of the ribosomal stalk, playing a central role in the interaction of the ribosome with GTP-bound translation factors. The polypeptide is Large ribosomal subunit protein uL10 (Ligilactobacillus salivarius (strain UCC118) (Lactobacillus salivarius)).